The primary structure comprises 66 residues: Light-harvesting protein B-800-850 alpha chain B (66 aa).

Topologically, residues Met-1 to Asn-11 are cytoplasmic. The chain crosses the membrane as a helical span at residues Pro-12 to Leu-35. An a bacteriochlorophyll-binding site is contributed by His-31. Over Ser-36–Lys-66 the chain is Periplasmic.

It belongs to the antenna complex alpha subunit family. In terms of assembly, the core complex is formed by different alpha and beta chains, binding bacteriochlorophyll molecules, and arranged most probably in tetrameric structures disposed around the reaction center. The non-pigmented gamma chains may constitute additional components.

It localises to the cell inner membrane. In terms of biological role, antenna complexes are light-harvesting systems, which transfer the excitation energy to the reaction centers. This chain is Light-harvesting protein B-800-850 alpha chain B (pucAB), found in Rhodopseudomonas palustris (strain ATCC BAA-98 / CGA009).